A 1053-amino-acid polypeptide reads, in one-letter code: DIS3-like exonuclease 1 (1053 aa).

The CSD1 domain occupies 236-310 (AGIKSGRYIQ…KSEWKGRTAA (75 aa)). A disordered region spans residues 306–332 (GRTAALGENDSDDKASGESPSEPMPTG). The CSD2 domain occupies 365–431 (ILVTPWDYRI…GEIATILVEN (67 aa)). One can recognise an RNB domain in the interval 465–816 (RKDLRTTHLV…VHRLLMAAIS (352 aa)). Phosphoserine is present on Ser-989.

This sequence belongs to the RNR ribonuclease family. Component of the RNA exosome complex. The catalytically inactive RNA exosome core (Exo-9) complex is believed to associate with catalytic subunits EXOSC10, and DIS3 or DIS3L in cytoplasmic- and nuclear-specific RNA exosome complex forms. Requires Mg(2+) as cofactor.

It is found in the cytoplasm. It carries out the reaction Exonucleolytic cleavage in the 3'- to 5'-direction to yield nucleoside 5'-phosphates.. Its function is as follows. Catalytic component of the RNA exosome complex which has 3'-&gt;5' exoribonuclease activity and participates in a multitude of cellular RNA processing and degradation events. In the cytoplasm, the RNA exosome complex is involved in general mRNA turnover and specifically degrades inherently unstable mRNAs containing AU-rich elements (AREs) within their 3' untranslated regions, and in RNA surveillance pathways, preventing translation of aberrant mRNAs. It seems to be involved in degradation of histone mRNA. The chain is DIS3-like exonuclease 1 (Dis3l) from Mus musculus (Mouse).